A 509-amino-acid chain; its full sequence is Light-independent protochlorophyllide reductase subunit B (509 aa).

A [4Fe-4S] cluster-binding site is contributed by Asp36. Asp298 acts as the Proton donor in catalysis. Residue 433-434 (GM) participates in substrate binding.

It belongs to the ChlB/BchB/BchZ family. As to quaternary structure, protochlorophyllide reductase is composed of three subunits; ChlL, ChlN and ChlB. Forms a heterotetramer of two ChlB and two ChlN subunits. It depends on [4Fe-4S] cluster as a cofactor.

The protein localises to the plastid. It is found in the chloroplast. The enzyme catalyses chlorophyllide a + oxidized 2[4Fe-4S]-[ferredoxin] + 2 ADP + 2 phosphate = protochlorophyllide a + reduced 2[4Fe-4S]-[ferredoxin] + 2 ATP + 2 H2O. It participates in porphyrin-containing compound metabolism; chlorophyll biosynthesis (light-independent). Functionally, component of the dark-operative protochlorophyllide reductase (DPOR) that uses Mg-ATP and reduced ferredoxin to reduce ring D of protochlorophyllide (Pchlide) to form chlorophyllide a (Chlide). This reaction is light-independent. The NB-protein (ChlN-ChlB) is the catalytic component of the complex. The chain is Light-independent protochlorophyllide reductase subunit B from Ephedra altissima (High-climbing jointfir).